Reading from the N-terminus, the 807-residue chain is MSGWQRIYYKLLNLPLRVLVKSKSIPAEPAQELGLDTSRPVMYVLPYNSKADLLTLRAQCLAHDLPDPLEPLEIDGALLPRYVFIHGGPRVFTYYTPKEESIKLFHDYLDLHRNHPDLDVQMVPVSVMFGRSPGREKGEVNPPLRMLNGIQKFFAVSWLGRDSFVRFSPSVSLRRMADEHGTDKIIAQKLARVARMHFARQRLAAVGPRLPARQDLFNKLLASKAIARAVEDEARSKKISHEKAQQNAIALMEEIAANFSYEMIRLTDRILGFTWNRLYQGINVHNAERVRQLAHDGHEIVYVPCHRSHMDYLLLSYVLYHQGLVPPHIAAGINLNFWPAGPIFRRLGAFFIRRTFKGNKLYSTVFREYLGELFSRGYSVEYFVEGGRSRTGRLLDPKTGTLSMTIQAMLRGGTRPITLVPIYIGYEHVMEVGTYAKELRGATKEKESLPQMVRGLSKLRNLGQGYVNFGEPLPLMTYLNHHVPEWREAIDPIEAIRPSWLTPTVNNIAADLMVRINNAGAANAMNLCCTALLASRQRSLTREQLTQQLECYLALLRNVPYSPDATTPSASASELIDHALQMNKFEVEKDTIGDIIILPREQAVLMTYYRNNIAHMLVIPSLLAALVTQHRQLSRTEVLRHVETLYPFLKAELFLRWEKAELAGVVDALIAEMLRQELIVVDGEVMSLNPSHSRSLQLLAAGARETLQRYAITFWLLSANPSINRSSLEKESRTVAQRLSVLHGINAPEFFDKAVFSTLVLTLRDEGYISDTGDAEPEETLKVYRMLADLITSDVRLTIESVTQDDA.

The HXXXXD motif motif lies at 305-310; it reads CHRSHM.

It belongs to the GPAT/DAPAT family.

The protein localises to the cell inner membrane. It catalyses the reaction sn-glycerol 3-phosphate + an acyl-CoA = a 1-acyl-sn-glycero-3-phosphate + CoA. Its pathway is phospholipid metabolism; CDP-diacylglycerol biosynthesis; CDP-diacylglycerol from sn-glycerol 3-phosphate: step 1/3. This is Glycerol-3-phosphate acyltransferase from Klebsiella pneumoniae (strain 342).